A 2193-amino-acid polypeptide reads, in one-letter code: Non-reducing polyketide synthase esdpA (2193 aa).

The region spanning 90 to 252 (NVLLAPLTVL…AKVQVNGRYH (163 aa)) is the Starter acyltransferase (SAT) domain. Residues 381–797 (DECVAIVGAA…GNNTVIIVCE (417 aa)) form the Ketosynthase family 3 (KS3) domain. Catalysis depends on for beta-ketoacyl synthase activity residues cysteine 546, histidine 682, and histidine 720. The Malonyl-CoA:ACP transacylase (MAT) domain maps to 906–1158 (VFSGQSGMTV…YFVDAVRRIK (253 aa)). Serine 992 acts as the For acyl/malonyl transferase activity in catalysis. The tract at residues 1265–1392 (PPMLSLENFS…GRVVLEDRRR (128 aa)) is N-terminal hotdog fold. In terms of domain architecture, PKS/mFAS DH spans 1265 to 1569 (PPMLSLENFS…FVKISSHILQ (305 aa)). Residues 1419–1569 (VFSASGSIAY…FVKISSHILQ (151 aa)) form a C-terminal hotdog fold region. The Proton donor; for dehydratase activity role is filled by aspartate 1479. Positions 1723-1799 (RILSDSMIKL…ELHDLMQSHP (77 aa)) constitute a Carrier domain. Residue serine 1759 is modified to O-(pantetheine 4'-phosphoryl)serine. Residues 1944 to 2177 (YHGSEHKLLR…GFTHVDWSND (234 aa)) form a methyltransferase (CMeT) domain region.

Pantetheine 4'-phosphate is required as a cofactor.

The protein operates within secondary metabolite biosynthesis; terpenoid biosynthesis. Functionally, non-reducing polyketide synthase; part of the cluster that mediates the biosynthesis of shearones, diterpenoid pyrones (DPs) which are structurally diverse meroterpenoids consisting of a diterpene linked by a pyrone, and which may exhibit a range of bioactivities. Whitin the pathway, esdpA takes part to the biosynthesis of the molecular scaffold via the production of the alpha-pyrone from one molecule of acetyl-CoA, two molecules of malonyl-CoA and one molecule of S-adenosyl-L-methionine (SAM). The molecular scaffold is commonly biosynthesized by a series of enzymes including the non-reducing polyketide synthase (NR-PKS) esdpA that generates an alpha-pyrone; the prenyltransferase esdpC that attaches a geranylgeranyl pyrophosphate (GGPP) produced by the GGPP synthase (GGPPS) esdpD onto the pyrone unit; the FAD-dependent monooxygenase esdpE that converts an olefin on the diterpene unit into an epoxide; and the terpene cyclase esdpB that catalyzes the cyclization reactions to give the molecular backbone shearone A. In the modification steps, esdpF oxidizes the hydroxy group to a ketone at C-3 and esdpG then attaches hydroxy groups at both C-11 and C-12. After that, esdpI hydroxylates at C-20 and esdpH hydroxylates at C-6'. The ether bridge is generated by nucleophilic attack of the hydroxy group at C-20 to the carbonyl carbon at C-3. EsdpH can also functions prior to esdpI. The different combinations of these modification enzymes lead to the production of diverse shearone derivatives, shearone I being the end product of the pathway. The alpha-ketoglutarate-dependent dioxygenase esdpJ seems not to be involved in this pathway. The protein is Non-reducing polyketide synthase esdpA of Penicillium shearii (Eupenicillium shearii).